Consider the following 446-residue polypeptide: Tubulin alpha chain-like 3 (446 aa).

Residues 1–4 (MREC) carry the MREC motif motif. Positions 11, 78, 147, 151, 152, 186, 213, and 235 each coordinate GTP. Glutamate 78 serves as a coordination point for Mg(2+). The active site involves glutamate 261.

This sequence belongs to the tubulin family. As to quaternary structure, dimer of alpha and beta chains. A typical microtubule is a hollow water-filled tube with an outer diameter of 25 nm and an inner diameter of 15 nM. Alpha-beta heterodimers associate head-to-tail to form protofilaments running lengthwise along the microtubule wall with the beta-tubulin subunit facing the microtubule plus end conferring a structural polarity. Microtubules usually have 13 protofilaments but different protofilament numbers can be found in some organisms and specialized cells. Mg(2+) serves as cofactor. Some glutamate residues at the C-terminus are polyglutamylated, resulting in polyglutamate chains on the gamma-carboxyl group. Polyglutamylation plays a key role in microtubule severing by spastin (SPAST). SPAST preferentially recognizes and acts on microtubules decorated with short polyglutamate tails: severing activity by SPAST increases as the number of glutamates per tubulin rises from one to eight, but decreases beyond this glutamylation threshold. Glutamylation is also involved in cilia motility. In terms of processing, some glutamate residues at the C-terminus are monoglycylated but not polyglycylated due to the absence of functional TTLL10 in human. Monoglycylation is mainly limited to tubulin incorporated into cilia and flagella axonemes, which is required for their stability and maintenance. Flagella glycylation controls sperm motility. Both polyglutamylation and monoglycylation can coexist on the same protein on adjacent residues, and lowering glycylation levels increases polyglutamylation, and reciprocally.

The protein resides in the cytoplasm. The protein localises to the cytoskeleton. It carries out the reaction GTP + H2O = GDP + phosphate + H(+). Its function is as follows. Tubulin is the major constituent of microtubules, a cylinder consisting of laterally associated linear protofilaments composed of alpha- and beta-tubulin heterodimers. Microtubules grow by the addition of GTP-tubulin dimers to the microtubule end, where a stabilizing cap forms. Below the cap, tubulin dimers are in GDP-bound state, owing to GTPase activity of alpha-tubulin. The chain is Tubulin alpha chain-like 3 (TUBAL3) from Homo sapiens (Human).